We begin with the raw amino-acid sequence, 72 residues long: Translation initiation factor IF-1 (72 aa).

The S1-like domain occupies 1 to 72; it reads MSKQSSIEQD…TKGRIVFRYK (72 aa).

Belongs to the IF-1 family. As to quaternary structure, component of the 30S ribosomal translation pre-initiation complex which assembles on the 30S ribosome in the order IF-2 and IF-3, IF-1 and N-formylmethionyl-tRNA(fMet); mRNA recruitment can occur at any time during PIC assembly.

It is found in the cytoplasm. Its function is as follows. One of the essential components for the initiation of protein synthesis. Stabilizes the binding of IF-2 and IF-3 on the 30S subunit to which N-formylmethionyl-tRNA(fMet) subsequently binds. Helps modulate mRNA selection, yielding the 30S pre-initiation complex (PIC). Upon addition of the 50S ribosomal subunit IF-1, IF-2 and IF-3 are released leaving the mature 70S translation initiation complex. This Cytophaga hutchinsonii (strain ATCC 33406 / DSM 1761 / CIP 103989 / NBRC 15051 / NCIMB 9469 / D465) protein is Translation initiation factor IF-1.